The sequence spans 494 residues: Sulfate adenylyltransferase subunit 1 (494 aa).

The region spanning 24-240 is the tr-type G domain; sequence TRPLRLITCG…LELATVRSAQ (217 aa). Residues 33–40 form a G1 region; the sequence is GSVDDGKS. 33–40 lines the GTP pocket; that stretch reads GSVDDGKS. Residues 91 to 95 form a G2 region; it reads GITID. The G3 stretch occupies residues 112-115; it reads DTPG. GTP is bound by residues 112 to 116 and 167 to 170; these read DTPGH and NKID. The tract at residues 167 to 170 is G4; it reads NKID. A G5 region spans residues 204-206; the sequence is SAL.

The protein belongs to the TRAFAC class translation factor GTPase superfamily. Classic translation factor GTPase family. CysN/NodQ subfamily. Heterodimer composed of CysD, the smaller subunit, and CysN.

It catalyses the reaction sulfate + ATP + H(+) = adenosine 5'-phosphosulfate + diphosphate. The protein operates within sulfur metabolism; hydrogen sulfide biosynthesis; sulfite from sulfate: step 1/3. In terms of biological role, with CysD forms the ATP sulfurylase (ATPS) that catalyzes the adenylation of sulfate producing adenosine 5'-phosphosulfate (APS) and diphosphate, the first enzymatic step in sulfur assimilation pathway. APS synthesis involves the formation of a high-energy phosphoric-sulfuric acid anhydride bond driven by GTP hydrolysis by CysN coupled to ATP hydrolysis by CysD. The polypeptide is Sulfate adenylyltransferase subunit 1 (Rhizobium tropici).